The following is a 573-amino-acid chain: NEDD4-binding protein 3-A (573 aa).

2 disordered regions span residues 168–216 (LNTM…INSL) and 382–407 (LRGESEELRQKQSQSDNSGPKLEDSK). Composition is skewed to polar residues over residues 184–196 (QPSNSHSNNQSES) and 207–216 (DSRQNSINSL). Positions 289-539 (VEDVARQLEE…KEIQSSYREM (251 aa)) form a coiled coil.

The protein belongs to the N4BP3 family.

The protein resides in the cytoplasmic vesicle. The protein localises to the cell projection. Its subcellular location is the axon. It is found in the dendrite. Functionally, plays a role in axon and dendrite arborization during cranial nerve development. Also important for neural crest migration and early development of other anterior structures including eye, brain and cranial cartilage. In Xenopus laevis (African clawed frog), this protein is NEDD4-binding protein 3-A.